The primary structure comprises 398 residues: 2,3-bisphosphoglycerate-independent phosphoglycerate mutase (398 aa).

It belongs to the BPG-independent phosphoglycerate mutase family. A-PGAM subfamily.

The enzyme catalyses (2R)-2-phosphoglycerate = (2R)-3-phosphoglycerate. The protein operates within carbohydrate degradation; glycolysis; pyruvate from D-glyceraldehyde 3-phosphate: step 3/5. Its function is as follows. Catalyzes the interconversion of 2-phosphoglycerate and 3-phosphoglycerate. The sequence is that of 2,3-bisphosphoglycerate-independent phosphoglycerate mutase from Methanosarcina barkeri (strain Fusaro / DSM 804).